The chain runs to 70 residues: uncharacterized protein (70 aa).

A helical transmembrane segment spans residues 15 to 37 (IFAFLLFRLCKFCCVFCCALCNV).

The protein resides in the membrane. This is an uncharacterized protein from Dictyostelium discoideum (Social amoeba).